The chain runs to 415 residues: E3 ubiquitin-protein ligase RNF135 (415 aa).

The RING-type zinc-finger motif lies at 21-67 (CIICQGLLDWPTTLPCGHSFCLQCLKDLWVSKRAGVDSCPWACPICR). Residues 181-206 (TFSASQKKIQEILRDLEKIQETLQGS) are a coiled coil. The 188-residue stretch at 228–415 (PDQRYPVSRK…LTPGNYLEIL (188 aa)) folds into the B30.2/SPRY domain.

Homodimer. Interacts (homodimer) with RIGI (double-stranded RNA-bound oligomeric form); involved in both RIGI ubiquitination, oligomerization into filaments associated with viral RNAs and the bridging of these filaments. Interacts with UBE2D3 and UBE2N; E2 ubiquitin ligases involved in RNF135-mediated ubiquitination of RIGI and activation of the RIG-I signaling pathway. Interacts with PCBP2.

Its subcellular location is the cytoplasm. The protein resides in the stress granule. It catalyses the reaction S-ubiquitinyl-[E2 ubiquitin-conjugating enzyme]-L-cysteine + [acceptor protein]-L-lysine = [E2 ubiquitin-conjugating enzyme]-L-cysteine + N(6)-ubiquitinyl-[acceptor protein]-L-lysine.. Its pathway is protein modification; protein ubiquitination. In terms of biological role, E2-dependent E3 ubiquitin-protein ligase that functions as a RIGI coreceptor in the sensing of viral RNAs in cell cytoplasm and the activation of the antiviral innate immune response. Together with the UBE2D3, UBE2N and UB2V1 E2 ligases, catalyzes the 'Lys-63'-linked polyubiquitination of RIGI oligomerized on viral RNAs, an essential step in the activation of the RIG-I signaling pathway. Through a ubiquitin-independent parallel mechanism, which consists in bridging RIGI filaments forming on longer viral RNAs, further activates the RIG-I signaling pathway. This second mechanism that synergizes with the ubiquitin-dependent one would thereby allow an RNA length-dependent regulation of the RIG-I signaling pathway. Associated with the E2 ligase UBE2N, also constitutively synthesizes unanchored 'Lys-63'-linked polyubiquitin chains that may also activate the RIG-I signaling pathway. The polypeptide is E3 ubiquitin-protein ligase RNF135 (Rattus norvegicus (Rat)).